The chain runs to 289 residues: Cytochrome bc1 complex cytochrome c subunit (289 aa).

The span at 1–11 (MKKLGFTRSSR) shows a compositional bias: basic residues. The segment at 1-28 (MKKLGFTRSSRRCSQPQEREQESERSRR) is disordered. Residues 37-55 (GLLLLVALTVSGGLAAVLT) form a helical membrane-spanning segment. 2 Cytochrome c domains span residues 69 to 149 (ALLR…QANG) and 170 to 248 (TDLG…RTVI). 6 residues coordinate heme c: C82, C85, H86, C183, C186, and H187. A helical membrane pass occupies residues 267 to 287 (GMAIWIIGMVTAIGLALWIGA).

As to quaternary structure, the cytochrome bc1 complex is composed of a cytochrome b (QcrB), the Rieske iron-sulfur protein (QcrA) and a diheme cytochrome c (QcrC) subunit. In terms of processing, binds 2 heme c groups covalently per subunit.

It is found in the cell membrane. The enzyme catalyses a quinol + 2 Fe(III)-[cytochrome c](out) = a quinone + 2 Fe(II)-[cytochrome c](out) + 2 H(+)(out). Cytochrome b subunit of the cytochrome bc1 complex, an essential component of the respiratory electron transport chain required for ATP synthesis. The bc1 complex catalyzes the oxidation of ubiquinol and the reduction of cytochrome c in the respiratory chain. The bc1 complex operates through a Q-cycle mechanism that couples electron transfer to generation of the proton gradient that drives ATP synthesis. The protein is Cytochrome bc1 complex cytochrome c subunit (qcrC) of Mycobacterium leprae (strain TN).